Reading from the N-terminus, the 66-residue chain is Photosystem II reaction center protein J (66 aa).

The chain crosses the membrane as a helical span at residues Leu-37 to Tyr-57.

Belongs to the PsbJ family. In terms of assembly, PSII is composed of 1 copy each of membrane proteins PsbA, PsbB, PsbC, PsbD, PsbE, PsbF, PsbH, PsbI, PsbJ, PsbK, PsbL, PsbM, PsbT, PsbX, PsbY, PsbZ, Psb30/Ycf12, peripheral proteins PsbO, CyanoQ (PsbQ), PsbU, PsbV and a large number of cofactors. It forms dimeric complexes.

It is found in the cellular thylakoid membrane. Its function is as follows. One of the components of the core complex of photosystem II (PSII). PSII is a light-driven water:plastoquinone oxidoreductase that uses light energy to abstract electrons from H(2)O, generating O(2) and a proton gradient subsequently used for ATP formation. It consists of a core antenna complex that captures photons, and an electron transfer chain that converts photonic excitation into a charge separation. The protein is Photosystem II reaction center protein J of Synechococcus sp. (strain WH7803).